The chain runs to 92 residues: N(2)-fixation sustaining protein CowN (92 aa).

This sequence belongs to the CowN family.

Is required to sustain N(2)-dependent growth in the presence of low levels of carbon monoxide (CO). Probably acts by protecting the N(2) fixation ability of the nitrogenase complex, which is inactivated in the presence of CO. This Cereibacter sphaeroides (strain ATCC 17025 / ATH 2.4.3) (Rhodobacter sphaeroides) protein is N(2)-fixation sustaining protein CowN.